The following is a 404-amino-acid chain: MQIGQRLGTPLSPSATRVMLLGAGELGKEVIIALQRLGVEVIAVDRYPNAPGHQVAHRAHVIDMTDPDALRALVDAERPHLVVPEIEAIATDALAAIEAAGVCEVIPTARATQLTMNREGIRRLAAEELGLPTSPYAFAQSFDEFAAAVARIGFPCVVKPVMSSSGKGQSVLRSEADIEPAWRYAMAGGRVNHGRVIVEGFIRFDYEITQLTVRAIDPASGQTRTSFCAPIGHLQVAGDYVESWQPQPMSAKALERSRDIAHRVTSALGGRGIFGVELFVRGDDVWFSEVSPRPHDTGLVTLASQRQSEFELHARAILGLPVEPALATPAASAVIYGGLDEAGIAFEGVRDALAVPGADLRLFGKPESFAKRRMGVALATGANVDEARERAKRAAAAVRPVSAR.

Residues glutamate 25–leucine 26 and glutamate 85 each bind N(1)-(5-phospho-beta-D-ribosyl)glycinamide. ATP-binding positions include arginine 118, lysine 159, serine 164–glutamine 169, glutamate 199–isoleucine 202, and glutamate 207. The 196-residue stretch at arginine 123–leucine 318 folds into the ATP-grasp domain. Mg(2+) contacts are provided by glutamate 277 and glutamate 289. N(1)-(5-phospho-beta-D-ribosyl)glycinamide contacts are provided by residues aspartate 296, lysine 365, and arginine 372–arginine 373.

Belongs to the PurK/PurT family. Homodimer.

The enzyme catalyses N(1)-(5-phospho-beta-D-ribosyl)glycinamide + formate + ATP = N(2)-formyl-N(1)-(5-phospho-beta-D-ribosyl)glycinamide + ADP + phosphate + H(+). Its pathway is purine metabolism; IMP biosynthesis via de novo pathway; N(2)-formyl-N(1)-(5-phospho-D-ribosyl)glycinamide from N(1)-(5-phospho-D-ribosyl)glycinamide (formate route): step 1/1. Functionally, involved in the de novo purine biosynthesis. Catalyzes the transfer of formate to 5-phospho-ribosyl-glycinamide (GAR), producing 5-phospho-ribosyl-N-formylglycinamide (FGAR). Formate is provided by PurU via hydrolysis of 10-formyl-tetrahydrofolate. This is Formate-dependent phosphoribosylglycinamide formyltransferase from Burkholderia mallei (strain NCTC 10247).